Consider the following 248-residue polypeptide: MEDTVIVGRHAVREAIITGHPINKILIQEGIKKQQINEILKNAKDQKIIVQTVPKSKLDFLANAPHQGVAALIAPYEYADFDQFLKQQKEKEGLLTVLILDGLEDPHNLGSILRTADATGVDGVIIPKRRSVTLTQTVAKASTGAIEHVPVIRVTNLAKTIDELKDNGFWVAGTEANNATDYRNLEADMSLAIVIGSEGQGMSRLVSDKCDFYIKIPMVGHVNSLNASVAASLMMYEVFRKRHDVGEI.

Residues G196, I216, and L225 each contribute to the S-adenosyl-L-methionine site.

This sequence belongs to the class IV-like SAM-binding methyltransferase superfamily. RNA methyltransferase TrmH family.

In Staphylococcus aureus (strain COL), this protein is Putative TrmH family tRNA/rRNA methyltransferase.